The chain runs to 163 residues: Flagellar assembly factor FliW (163 aa).

The span at 136-156 shows a compositional bias: basic and acidic residues; it reads PFFETSEKKQSGLQRLERQPE. Residues 136 to 163 form a disordered region; it reads PFFETSEKKQSGLQRLERQPEKSVPPAG.

The protein belongs to the FliW family. Interacts with translational regulator CsrA and flagellin(s).

It localises to the cytoplasm. Acts as an anti-CsrA protein, binds CsrA and prevents it from repressing translation of its target genes, one of which is flagellin. Binds to flagellin and participates in the assembly of the flagellum. The protein is Flagellar assembly factor FliW of Geotalea uraniireducens (strain Rf4) (Geobacter uraniireducens).